A 904-amino-acid polypeptide reads, in one-letter code: MVDYHSAGQPYPYGGNGPGPNGDYMAQEDDWDRDLLLDPAWEKQQRKTFTAWCNSHLRKAGTQIENIDEDFRDGLKLMLLLEVISGERLPKPERGKMRVHKINNVNKALDFIASKGVNVVSIGAEEIVDGNAKMTLGMIWTIILRFAIQDISVEETSAKEGLLLWCQRKTAPYKNVNVQNFHISWKDGLAFNALIHRHRPELIEYDKLRKDDPVTNLNNAFEVAEKYLDIPKMLDAEDIVNTARPDEKAIMTYVSSFYHAFSGAQKAETAANRICKVLAVNQENEHLMEDYEKLASDLLEWIRRTIPWLEDRSPQKTIQEMQQKLEDFRDYRRVHKPPKVQEKCQLEINFNTLQTKLRLSNRPAFMPSEGRMVSDINTGWQHLEQAEKGYEEWLLNEIRRLEPLDHLAEKFRQKASIHEAWTEGKEAMLKQKDYETATLSDIKALIRKHEAFESDLAAHQDRVEQIAAIAQELNELDYYDSPSVNARCQKICDQWDVLGSLTHSRREALEKTEKQLETIDELHLEYAKRAAPFNNWMESAMEDLQDMFIVHTIEEIEGLIAAHDQFKATLPDADREREAILGIQREAQRIADLHSIKLSGNNPYTSVTPQVINSKWERVQQLVPTRDRALQDEQSRQQCNERLRRQFAGQANIVGPWMQTKMEEIGRISIEMHGTLEDQLQHLKHYEQSIVDYKPNLELLEHEHQLVEEALIFDNKHTNYTMEHIRVGWEQLLTTIARTINEVENQILTRDAKGISQEQMQEFRASFNHFDKDHCGALGPEEFKACLISLGYDVENDRQGDAEFNRIMSLVDPNGSGSVTFQAFIDFMSRETTDTDTADQVIASFKVLAGDKNYITAEELRRELPPEQAEYCIARMAPYRGPDAAPGALDYKSFSTALYGESDL.

The tract at residues 1–27 (MVDYHSAGQPYPYGGNGPGPNGDYMAQ) is disordered. Residues 1–259 (MVDYHSAGQP…IMTYVSSFYH (259 aa)) form an actin-binding region. 2 consecutive Calponin-homology (CH) domains span residues 43–147 (KQQR…LRFA) and 156–262 (TSAK…HAFS). Spectrin repeat units lie at residues 286–396 (HLME…WLLN), 406–511 (HLAE…ALEK), 521–632 (ELHL…ALQD), and 642–745 (RLRR…EVEN). 2 EF-hand domains span residues 758–793 (EQMQEFRASFNHFDKDHCGALGPEEFKACLISLGYD) and 799–834 (QGDAEFNRIMSLVDPNGSGSVTFQAFIDFMSRETTD). Ca(2+)-binding residues include D771, D773, E782, D812, N814, S816, and S818.

Belongs to the alpha-actinin family. As to quaternary structure, homodimer; antiparallel. Component of the CART complex. May interact with nuclear receptors.

Its subcellular location is the nucleus. The protein resides in the cytoplasm. The protein localises to the cell junction. It is found in the perinuclear region. In terms of biological role, F-actin cross-linking protein which is thought to anchor actin to a variety of intracellular structures. This is a bundling protein. Probably involved in vesicular trafficking via its association with the CART complex. Involved in tight junction assembly in epithelial cells. May also function as a transcriptional coactivator, stimulating transcription mediated by nuclear hormone receptors. The polypeptide is Alpha-actinin-4 (Gallus gallus (Chicken)).